We begin with the raw amino-acid sequence, 227 residues long: Ribose-5-phosphate isomerase A (227 aa).

Substrate is bound by residues 26 to 29 (TGST), 82 to 85 (DGAD), and 95 to 98 (KGGG). The active-site Proton acceptor is the Glu-104. Lys-122 serves as a coordination point for substrate.

This sequence belongs to the ribose 5-phosphate isomerase family. In terms of assembly, homodimer.

The enzyme catalyses aldehydo-D-ribose 5-phosphate = D-ribulose 5-phosphate. It participates in carbohydrate degradation; pentose phosphate pathway; D-ribose 5-phosphate from D-ribulose 5-phosphate (non-oxidative stage): step 1/1. Its function is as follows. Catalyzes the reversible conversion of ribose-5-phosphate to ribulose 5-phosphate. This is Ribose-5-phosphate isomerase A from Streptococcus pneumoniae serotype 2 (strain D39 / NCTC 7466).